The primary structure comprises 1164 residues: MVSGGGSKTSGGEAASSGHRRSRHTSAAEQAQSSANKALRSQNQQPQNHGGGTESTNKAIQQYTVDARLHAVFEQSGESGKSFDYSQSLKTAPYDSSVPEQQITAYLSRIQRGGYTQPFGCLIAVEESTFTIIGYSENAREMLGLMSQSVPSIEDKSEVLTIGTDLRSLFKSSSYLLLERAFVAREITLLNPIWIHSNNTGKPFYAILHRVDVGILIDLEPARTEDPALSIAGAVQSQKLAVRAISHLQSLPSGDIKLLCDTVVESVRDLTGYDRVMVYKFHEDEHGEVVAESKRNDLEPYIGLHYPATDIPQASRFLFKQNRVRMIVDCYASPVRVVQDDRLTQFICLVGSTLRAPHGCHAQYMTNMGSIASLAMAVIINGNEEDGNGVNTGGRNSMRLWGLVVCHHTSARCIPFPLRYACEFLMQAFGLQLNMELQLALQVSEKRVLRMQTLLCDMLLRDSPAGIVTQRPSIMDLVKCNGAAFLYQGKYYPLGVTPTDSQINDIVEWLVANHSDSTGLSTDSLGDAGYPRAAALGDAVCGMAVACITKRDFLFWFRSHTEKEIKWGGAKHHPEDKDDGQRMNPRSSFQTFLEVVKSRCQPWETAEMDAIHSLQLILRDSFKESEAMDSKAAAAGAVQPHGDDMVQQGMQEIGAVAREMVRLIETATVPIFAVDIDGCINGWNAKIAELTGLSVEDAMGKSLVRELIYKEYKETVDRLLSCALKGDEGKNVEVKLKTFGSELQGKAMFVVVNACSSKDYLNNIVGVCFVGQDVTGHKIVMDKFINIQGDYKAIIHSPNPLIPPIFAADENTCCLEWNTAMEKLTGWPRSEVIGKLLVREVFGSYCRLKGPDALTKFMIVLHNAIGGQDTDKFPFPFFDRKGEFIQALLTLNKRVSIDGKIIGAFCFLQIPSPELQQALEVQRRQESEYFSRRKELAYIFQVIKNPLSGLRFTNSLLEDMDLNEDQKQLLETSVSCEKQISKIVGDMDVKSIDDGSFLLERTEFFIGNVTNAVVSQVMLVVRERNLQLIRNIPTEVKSMAVYGDQIRLQQVLAEFLLSIVRYAPMEGSVELHLCPTLNQMADGFSAVRLEFRMACAGEGVPPEKVQDMFHSSRWTSPEGLGLSVCRKILKLMNGGVQYIREFERSYFLIVIELPVPLMMMMPSS.

Residues 1–55 (MVSGGGSKTSGGEAASSGHRRSRHTSAAEQAQSSANKALRSQNQQPQNHGGGTES) form a disordered region. The span at 25 to 55 (TSAAEQAQSSANKALRSQNQQPQNHGGGTES) shows a compositional bias: polar residues. A GAF domain is found at 255–437 (DIKLLCDTVV…AFGLQLNMEL (183 aa)). A phytochromobilin-binding site is contributed by C360. 2 consecutive PAS domains span residues 656-727 (VARE…LKGD) and 790-861 (DYKA…MIVL). The Histidine kinase domain occupies 938-1157 (YIFQVIKNPL…LIVIELPVPL (220 aa)).

The protein belongs to the phytochrome family. Homodimer. Contains one covalently linked phytochromobilin chromophore.

In terms of biological role, regulatory photoreceptor which exists in two forms that are reversibly interconvertible by light: the Pr form that absorbs maximally in the red region of the spectrum and the Pfr form that absorbs maximally in the far-red region. Photoconversion of Pr to Pfr induces an array of morphogenic responses, whereas reconversion of Pfr to Pr cancels the induction of those responses. Pfr controls the expression of a number of nuclear genes including those encoding the small subunit of ribulose-bisphosphate carboxylase, chlorophyll A/B binding protein, protochlorophyllide reductase, rRNA, etc. It also controls the expression of its own gene(s) in a negative feedback fashion. The polypeptide is Phytochrome D (PHYD) (Arabidopsis thaliana (Mouse-ear cress)).